A 467-amino-acid chain; its full sequence is UPF0236 protein TTE0033/TTE0744/TTE0838/TTE0852/TTE1082/TTE1247/TTE1519/TTE1678/TTE1739/TTE1823/TTE2212 (467 aa).

Belongs to the UPF0236 family.

In Caldanaerobacter subterraneus subsp. tengcongensis (strain DSM 15242 / JCM 11007 / NBRC 100824 / MB4) (Thermoanaerobacter tengcongensis), this protein is UPF0236 protein TTE0033/TTE0744/TTE0838/TTE0852/TTE1082/TTE1247/TTE1519/TTE1678/TTE1739/TTE1823/TTE2212.